We begin with the raw amino-acid sequence, 777 residues long: 1,4-alpha-glucan branching enzyme GlgB (777 aa).

Asp408 (nucleophile) is an active-site residue. Glu461 serves as the catalytic Proton donor.

Belongs to the glycosyl hydrolase 13 family. GlgB subfamily. Monomer.

It catalyses the reaction Transfers a segment of a (1-&gt;4)-alpha-D-glucan chain to a primary hydroxy group in a similar glucan chain.. It functions in the pathway glycan biosynthesis; glycogen biosynthesis. Catalyzes the formation of the alpha-1,6-glucosidic linkages in glycogen by scission of a 1,4-alpha-linked oligosaccharide from growing alpha-1,4-glucan chains and the subsequent attachment of the oligosaccharide to the alpha-1,6 position. This Actinobacillus pleuropneumoniae serotype 5b (strain L20) protein is 1,4-alpha-glucan branching enzyme GlgB.